The primary structure comprises 470 residues: 3-oxo-isoapionate kinase (470 aa).

Substrate is bound by residues Asp30 and Arg78. Residues Ser291, 403–406 (GGDS), and Gly451 contribute to the ATP site.

This sequence belongs to the four-carbon acid sugar kinase family.

The enzyme catalyses 3-oxoisoapionate + ATP = 3-oxoisoapionate 4-phosphate + ADP + H(+). Its pathway is carbohydrate metabolism. In terms of biological role, involved in catabolism of D-apiose. Catalyzes the phosphorylation of 3-oxo-isoapionate to 3-oxo-isoapionate 4-phosphate. In Paraburkholderia graminis (strain ATCC 700544 / DSM 17151 / LMG 18924 / NCIMB 13744 / C4D1M), this protein is 3-oxo-isoapionate kinase.